The chain runs to 376 residues: Erythronate-4-phosphate dehydrogenase (376 aa).

2 residues coordinate substrate: serine 45 and threonine 67. Residue aspartate 147 coordinates NAD(+). Arginine 209 is an active-site residue. Position 233 (aspartate 233) interacts with NAD(+). The active site involves glutamate 238. The active-site Proton donor is histidine 255. Position 258 (glycine 258) interacts with NAD(+). Position 259 (tyrosine 259) interacts with substrate.

The protein belongs to the D-isomer specific 2-hydroxyacid dehydrogenase family. PdxB subfamily. In terms of assembly, homodimer.

The protein resides in the cytoplasm. It carries out the reaction 4-phospho-D-erythronate + NAD(+) = (R)-3-hydroxy-2-oxo-4-phosphooxybutanoate + NADH + H(+). It participates in cofactor biosynthesis; pyridoxine 5'-phosphate biosynthesis; pyridoxine 5'-phosphate from D-erythrose 4-phosphate: step 2/5. Catalyzes the oxidation of erythronate-4-phosphate to 3-hydroxy-2-oxo-4-phosphonooxybutanoate. The protein is Erythronate-4-phosphate dehydrogenase of Shewanella sp. (strain MR-4).